Here is a 203-residue protein sequence, read N- to C-terminus: Lectin (203 aa).

An N-terminal signal peptide occupies residues 1–20 (MINILHVIAGLALASVGVDA). A propeptide spanning residues 21–53 (RQVGVGADVLHAVENTIDSITGVEASHSALEVG) is cleaved from the precursor.

In terms of assembly, monomer.

N-acetyl-D-glucosamine-specific lectin. Specifically agglutinates rabbit erythrocytes. This Ulva pertusa (Sea lettuce) protein is Lectin (UPL1).